A 266-amino-acid chain; its full sequence is Thymidylate synthase (266 aa).

Residues arginine 20 and arginine 129–arginine 130 contribute to the dUMP site. Residue cysteine 149 is the Nucleophile of the active site. Residues arginine 169–aspartate 172, asparagine 180, and histidine 210–tyrosine 212 contribute to the dUMP site. Aspartate 172 serves as a coordination point for (6R)-5,10-methylene-5,6,7,8-tetrahydrofolate. (6R)-5,10-methylene-5,6,7,8-tetrahydrofolate is bound at residue alanine 265.

It belongs to the thymidylate synthase family. Bacterial-type ThyA subfamily. As to quaternary structure, homodimer.

The protein localises to the cytoplasm. It catalyses the reaction dUMP + (6R)-5,10-methylene-5,6,7,8-tetrahydrofolate = 7,8-dihydrofolate + dTMP. Its pathway is pyrimidine metabolism; dTTP biosynthesis. In terms of biological role, catalyzes the reductive methylation of 2'-deoxyuridine-5'-monophosphate (dUMP) to 2'-deoxythymidine-5'-monophosphate (dTMP) while utilizing 5,10-methylenetetrahydrofolate (mTHF) as the methyl donor and reductant in the reaction, yielding dihydrofolate (DHF) as a by-product. This enzymatic reaction provides an intracellular de novo source of dTMP, an essential precursor for DNA biosynthesis. In Bifidobacterium longum (strain NCC 2705), this protein is Thymidylate synthase.